We begin with the raw amino-acid sequence, 344 residues long: Isopentenyl-diphosphate delta-isomerase (344 aa).

Arg-9–Lys-10 is a substrate binding site. FMN is bound by residues Ala-65–Thr-67, Ser-95, and Asn-124. Gln-154 contacts substrate. Glu-155 contacts Mg(2+). FMN is bound by residues Lys-185, Thr-215, Gly-259–Arg-261, and Ser-280–Gly-281.

Belongs to the IPP isomerase type 2 family. Homooctamer. Dimer of tetramers. FMN is required as a cofactor. NADPH serves as cofactor. The cofactor is Mg(2+).

Its subcellular location is the cytoplasm. The enzyme catalyses isopentenyl diphosphate = dimethylallyl diphosphate. In terms of biological role, involved in the biosynthesis of isoprenoids. Catalyzes the 1,3-allylic rearrangement of the homoallylic substrate isopentenyl (IPP) to its allylic isomer, dimethylallyl diphosphate (DMAPP). The protein is Isopentenyl-diphosphate delta-isomerase of Lacticaseibacillus paracasei (strain ATCC 334 / BCRC 17002 / CCUG 31169 / CIP 107868 / KCTC 3260 / NRRL B-441) (Lactobacillus paracasei).